The primary structure comprises 333 residues: Probable tRNA pseudouridine synthase B (333 aa).

Asp-66 (nucleophile) is an active-site residue. One can recognise a PUA domain in the interval 233–308 (LKKIIVKDSA…EVVEITRVIM (76 aa)).

It belongs to the pseudouridine synthase TruB family. Type 2 subfamily.

The enzyme catalyses uridine(55) in tRNA = pseudouridine(55) in tRNA. In terms of biological role, could be responsible for synthesis of pseudouridine from uracil-55 in the psi GC loop of transfer RNAs. This chain is Probable tRNA pseudouridine synthase B, found in Methanococcus maripaludis (strain C5 / ATCC BAA-1333).